A 154-amino-acid polypeptide reads, in one-letter code: 6,7-dimethyl-8-ribityllumazine synthase (154 aa).

Residues F15, 47–49, and 71–73 each bind 5-amino-6-(D-ribitylamino)uracil; these read TFD and AVI. Residue 76–77 coordinates (2S)-2-hydroxy-3-oxobutyl phosphate; sequence ET. Residue H79 is the Proton donor of the active site. Position 104 (L104) interacts with 5-amino-6-(D-ribitylamino)uracil. R119 contacts (2S)-2-hydroxy-3-oxobutyl phosphate.

Belongs to the DMRL synthase family.

The enzyme catalyses (2S)-2-hydroxy-3-oxobutyl phosphate + 5-amino-6-(D-ribitylamino)uracil = 6,7-dimethyl-8-(1-D-ribityl)lumazine + phosphate + 2 H2O + H(+). Its pathway is cofactor biosynthesis; riboflavin biosynthesis; riboflavin from 2-hydroxy-3-oxobutyl phosphate and 5-amino-6-(D-ribitylamino)uracil: step 1/2. Its function is as follows. Catalyzes the formation of 6,7-dimethyl-8-ribityllumazine by condensation of 5-amino-6-(D-ribitylamino)uracil with 3,4-dihydroxy-2-butanone 4-phosphate. This is the penultimate step in the biosynthesis of riboflavin. The protein is 6,7-dimethyl-8-ribityllumazine synthase of Saccharolobus islandicus (strain M.16.27) (Sulfolobus islandicus).